The following is a 340-amino-acid chain: Dual specificity protein phosphatase 12 (340 aa).

M1 is modified (N-acetylmethionine). The Tyrosine-protein phosphatase domain occupies 26–171; the sequence is QMLEVQPGLY…LKLYQAMGYE (146 aa). The Phosphocysteine intermediate role is filled by C115. Position 116–121 (116–121) interacts with substrate; it reads HAGVSR. A Phosphoserine modification is found at S335.

It belongs to the protein-tyrosine phosphatase family. Non-receptor class dual specificity subfamily. Monomer. It depends on Zn(2+) as a cofactor. Ubiquitous, highest expression in spleen, testis, ovary, and peripheral blood leukocytes and lower expression in liver and lung.

It localises to the nucleus. The protein localises to the cytoplasm. Its subcellular location is the cytosol. It catalyses the reaction O-phospho-L-tyrosyl-[protein] + H2O = L-tyrosyl-[protein] + phosphate. The catalysed reaction is O-phospho-L-seryl-[protein] + H2O = L-seryl-[protein] + phosphate. The enzyme catalyses O-phospho-L-threonyl-[protein] + H2O = L-threonyl-[protein] + phosphate. In terms of biological role, dual specificity phosphatase; can dephosphorylate both phosphotyrosine and phosphoserine or phosphothreonine residues. Can dephosphorylate glucokinase (in vitro). Has phosphatase activity with the synthetic substrate 6,8-difluoro-4-methylumbelliferyl phosphate and other in vitro substrates. This is Dual specificity protein phosphatase 12 (DUSP12) from Homo sapiens (Human).